Consider the following 107-residue polypeptide: BolA-like protein 3 (107 aa).

It belongs to the BolA/IbaG family. Interacts with NFU1. As to expression, widely expressed.

It localises to the mitochondrion. Its function is as follows. Acts as a mitochondrial iron-sulfur (Fe-S) cluster assembly factor that facilitates (Fe-S) cluster insertion into a subset of mitochondrial proteins. Probably acts together with NFU1. The chain is BolA-like protein 3 from Homo sapiens (Human).